The chain runs to 350 residues: tRNA uridine(34) hydroxylase (350 aa).

One can recognise a Rhodanese domain in the interval 146-240; it reads DDPDALFIDM…YARKAREQGL (95 aa). The active-site Cysteine persulfide intermediate is the Cys200.

The protein belongs to the TrhO family.

It catalyses the reaction uridine(34) in tRNA + AH2 + O2 = 5-hydroxyuridine(34) in tRNA + A + H2O. Functionally, catalyzes oxygen-dependent 5-hydroxyuridine (ho5U) modification at position 34 in tRNAs. This Shigella sonnei (strain Ss046) protein is tRNA uridine(34) hydroxylase.